A 496-amino-acid polypeptide reads, in one-letter code: Glycylpeptide N-tetradecanoyltransferase 1 (496 aa).

The disordered stretch occupies residues 1–82 (MADESETAVK…SAQDQPVKMN (82 aa)). Residues serine 31 and serine 47 each carry the phosphoserine modification. Positions 55-66 (KKKKKKQKKKKE) are enriched in basic residues. Serine 83 carries the post-translational modification Phosphoserine. Positions 118, 119, 120, 247, 248, 249, 250, 256, 258, 259, and 260 each coordinate tetradecanoyl-CoA.

It belongs to the NMT family.

Its subcellular location is the cytoplasm. It is found in the cytosol. The protein resides in the membrane. It carries out the reaction N-terminal glycyl-[protein] + tetradecanoyl-CoA = N-tetradecanoylglycyl-[protein] + CoA + H(+). It catalyses the reaction N-terminal glycyl-L-lysyl-[protein] + tetradecanoyl-CoA = N-terminal glycyl-(N(6)-tetradecanoyl)-L-lysyl-[protein] + CoA + H(+). Adds a myristoyl group to the N-terminal glycine residue of certain cellular and viral proteins. Also able to mediate N-terminal lysine myristoylation of proteins: catalyzes myristoylation of ARF6 on both 'Gly-2' and 'Lys-3'. Lysine myristoylation is required to maintain ARF6 on membranes during the GTPase cycle. The sequence is that of Glycylpeptide N-tetradecanoyltransferase 1 (NMT1) from Pongo abelii (Sumatran orangutan).